A 1553-amino-acid polypeptide reads, in one-letter code: DNA topoisomerase 2-alpha (1553 aa).

Residues 1–25 (MELLDSPAPLRPLHDNPRLPKADGA) form a disordered region. Over residues 12-25 (PLHDNPRLPKADGA) the composition is skewed to basic and acidic residues. Residues N92, N121, 149–151 (SSN), and 162–169 (GRNGYGAK) contribute to the ATP site. The interval 343–345 (KKK) is interaction with DNA. 377–379 (QTK) is an ATP binding site. The region spanning 456–573 (CTLILTEGDS…SLLRHNFLEE (118 aa)) is the Toprim domain. Mg(2+) contacts are provided by E462, D542, and D544. Residues 716-1163 (IPSLVDGLKP…SPSDLWKEDL (448 aa)) enclose the Topo IIA-type catalytic domain. Y806 functions as the O-(5'-phospho-DNA)-tyrosine intermediate in the catalytic mechanism. The interval 991–1000 (KLQTNLTCNS) is interaction with DNA. Disordered stretches follow at residues 1095–1114 (QNKE…AATG) and 1186–1553 (TGKP…DDMF). The segment covering 1098–1107 (EEEEGDESGE) has biased composition (acidic residues). Residues 1242-1262 (SEKNESDEKQEGNSSGDKEPS) show a composition bias toward basic and acidic residues. Composition is skewed to acidic residues over residues 1300 to 1310 (SESDSESDDFE) and 1334 to 1349 (SDAD…EYQE). A compositionally biased stretch (basic and acidic residues) spans 1371–1385 (VPKEKKGKAPKEKPL). A compositionally biased stretch (low complexity) spans 1413–1432 (PRAQAVPKKPAAAKKGSTAK). Positions 1444-1454 (KKKAAPKAPRR) are enriched in basic residues. Positions 1517 to 1532 (SIDLTADSPAAAAPRT) are enriched in low complexity.

The protein belongs to the type II topoisomerase family. As to quaternary structure, homodimer. Requires Mg(2+) as cofactor. It depends on Mn(2+) as a cofactor. Ca(2+) serves as cofactor.

Its subcellular location is the cytoplasm. It localises to the nucleus. The protein localises to the nucleoplasm. The protein resides in the nucleolus. The enzyme catalyses ATP-dependent breakage, passage and rejoining of double-stranded DNA.. Its function is as follows. Key decatenating enzyme that alters DNA topology by binding to two double-stranded DNA molecules, generating a double-stranded break in one of the strands, passing the intact strand through the broken strand, and religating the broken strand. May play a role in the regulation of circadian rhythm. The chain is DNA topoisomerase 2-alpha (TOP2A) from Gallus gallus (Chicken).